The sequence spans 210 residues: Ribosomal RNA small subunit methyltransferase G (210 aa).

S-adenosyl-L-methionine is bound by residues Gly76, Leu81, 127-128 (VE), and Arg142.

The protein belongs to the methyltransferase superfamily. RNA methyltransferase RsmG family.

The protein localises to the cytoplasm. It catalyses the reaction guanosine(527) in 16S rRNA + S-adenosyl-L-methionine = N(7)-methylguanosine(527) in 16S rRNA + S-adenosyl-L-homocysteine. Its function is as follows. Specifically methylates the N7 position of guanine in position 527 of 16S rRNA. This Vibrio cholerae serotype O1 (strain ATCC 39315 / El Tor Inaba N16961) protein is Ribosomal RNA small subunit methyltransferase G.